Consider the following 618-residue polypeptide: Glucose starvation modulator protein 1 (618 aa).

Residues 20–48 constitute a DNA-binding region (zn(2)-C6 fungal-type); the sequence is CEFCHTKHIQCDVGRPCQNCLKRNIGKFC. The disordered stretch occupies residues 325–352; that stretch reads ANANTHPSHNAKLESECDSSSHSDADLE. The segment covering 335–352 has biased composition (basic and acidic residues); it reads AKLESECDSSSHSDADLE. The 73-residue stretch at 466–538 folds into the PAS domain; the sequence is LLDLENMAKL…QIFNELLAFG (73 aa).

Belongs to the ERT1/acuK family.

Its subcellular location is the nucleus. Functionally, transcription factor which regulates nonfermentable carbon utilization. Binds specifically to 5'-CGGN(8)CGG-3' and 5'-CGGN(9)CGG-3' sequences in the promoter region. The sequence is that of Glucose starvation modulator protein 1 (GSM1) from Saccharomyces cerevisiae (strain YJM789) (Baker's yeast).